The sequence spans 590 residues: Aspartate--tRNA(Asp/Asn) ligase (590 aa).

Residue Glu-172 participates in L-aspartate binding. The segment at 196-199 (QLFK) is aspartate. Arg-218 contacts L-aspartate. Residues 218–220 (RDE) and Gln-227 contribute to the ATP site. An L-aspartate-binding site is contributed by His-449. Glu-484 contributes to the ATP binding site. Arg-491 provides a ligand contact to L-aspartate. 536–539 (GIDR) contributes to the ATP binding site.

The protein belongs to the class-II aminoacyl-tRNA synthetase family. Type 1 subfamily. In terms of assembly, homodimer.

The protein resides in the cytoplasm. The enzyme catalyses tRNA(Asx) + L-aspartate + ATP = L-aspartyl-tRNA(Asx) + AMP + diphosphate. Functionally, aspartyl-tRNA synthetase with relaxed tRNA specificity since it is able to aspartylate not only its cognate tRNA(Asp) but also tRNA(Asn). Reaction proceeds in two steps: L-aspartate is first activated by ATP to form Asp-AMP and then transferred to the acceptor end of tRNA(Asp/Asn). This Francisella tularensis subsp. tularensis (strain SCHU S4 / Schu 4) protein is Aspartate--tRNA(Asp/Asn) ligase.